The following is an 887-amino-acid chain: MSHRILSPPAGLLSDEDVVDSPILESTAADLRSVVRKDLLSDCSVISASLEDKQALLEDTSEKVKVYLRIRPFLTSELDRQEDQGCVCIENTETLVLQAPKDSFALKSNERGVGQATHKFTFSQIFGPEVGQVAFFNLTMKEMVKDVLKGQNWLIYTYGVTNSGKTYTIQGTSKDAGILPQSLALIFNSLQGQLHPTPDLKPLLSNEVIWLDSKQIRQEEMKKLSLLIGGLQEEELSTSVKKRVHTESRIGASNSFDSGVAGLSSTSQFTSSSQLDETSQLWAQPDTVPVSVPADIRFSVWISFFEIYNELLYDLLEPPSHQHKRQTLRLCEDQNGNPYVKDLNWIHVRDVEEAWKLLKVGRKNQSFASTHMNQQSSRSHSIFSIRILHLQGEGDIVPKISELSLCDLAGSERCKHQKSGERLKEAGNINTSLHTLGRCIAALRQNQQNRSKQNLIPFRDSKLTRVFQGFFTGRGRSCMIVNVNPCASTYDETLHAAKFSALASQLVHAPPVHLGIPSLHSFIKKHSPQVGPGLEKEDKADSDLEDSPEDEADVSVYGKEELLQVVEAMKALLLKERQEKLQLEIQLREEICNEMVEQMQQREQWCSERLDNQKELMEELYEEKLKILKESLTTFYQEQIQERDEKIEELETLLQEAKQQPAAQQSGGLSLLRRSQRLAASASTQQFQEVKAELEQCKTELSSTTAELHKYQQVLKPPPPAKPFTIDVDKKLEEGQKNIRLLRTELQKLGQSLQSAERACCHSTGAGKLRQALTNCDDILIKQNQTLAELQNNMVLVKLDLQKKAACIAEQYHTVLKLQGQASAKKRLGANQENQQPNHQPPGKKPFLRNLLPRTPTCQSSTDSSPYARILRSRHSPLLKSPFGKKY.

The residue at position 2 (serine 2) is an N-acetylserine. Phosphoserine is present on residues serine 7, serine 14, and serine 21. The region spanning 63-506 is the Kinesin motor domain; sequence KVKVYLRIRP…AKFSALASQL (444 aa). 159–166 serves as a coordination point for ATP; that stretch reads GVTNSGKT. Residue serine 527 is modified to Phosphoserine; by PLK1. The tract at residues 527-553 is disordered; it reads SPQVGPGLEKEDKADSDLEDSPEDEAD. Positions 543 to 553 are enriched in acidic residues; sequence DLEDSPEDEAD. The stretch at 559–804 forms a coiled coil; the sequence is KEELLQVVEA…VLVKLDLQKK (246 aa). Residues serine 683 and serine 823 each carry the phosphoserine modification. The segment at 805 to 887 is globular; it reads AACIAEQYHT…LLKSPFGKKY (83 aa). Residues 826–875 form a disordered region; that stretch reads KRLGANQENQQPNHQPPGKKPFLRNLLPRTPTCQSSTDSSPYARILRSRH. Threonine 855 bears the Phosphothreonine mark. A compositionally biased stretch (polar residues) spans 856-865; the sequence is PTCQSSTDSS. Phosphoserine occurs at positions 865, 876, and 881.

This sequence belongs to the TRAFAC class myosin-kinesin ATPase superfamily. Kinesin family. Phosphorylated by PLK1 at Ser-527 during mitosis, creating a docking site for PLK1 and recruiting PLK1 at central spindle. In terms of tissue distribution, ubiquitously expressed, with highest levels in spleen and testis.

Its subcellular location is the golgi apparatus. It localises to the cytoplasm. The protein localises to the cytoskeleton. The protein resides in the spindle. Functionally, mitotic kinesin required for chromosome passenger complex (CPC)-mediated cytokinesis. Following phosphorylation by PLK1, involved in recruitment of PLK1 to the central spindle. Interacts with guanosine triphosphate (GTP)-bound forms of RAB6A and RAB6B. May act as a motor required for the retrograde RAB6 regulated transport of Golgi membranes and associated vesicles along microtubules. Has a microtubule plus end-directed motility. The protein is Kinesin-like protein KIF20A (Kif20a) of Mus musculus (Mouse).